A 326-amino-acid polypeptide reads, in one-letter code: Glyoxylate/hydroxypyruvate reductase B (326 aa).

Active-site residues include Arg237 and Glu266. His285 serves as the catalytic Proton donor.

This sequence belongs to the D-isomer specific 2-hydroxyacid dehydrogenase family. GhrB subfamily. Homodimer.

The protein resides in the cytoplasm. It carries out the reaction glycolate + NADP(+) = glyoxylate + NADPH + H(+). The catalysed reaction is (R)-glycerate + NAD(+) = 3-hydroxypyruvate + NADH + H(+). The enzyme catalyses (R)-glycerate + NADP(+) = 3-hydroxypyruvate + NADPH + H(+). In terms of biological role, catalyzes the NADPH-dependent reduction of glyoxylate and hydroxypyruvate into glycolate and glycerate, respectively. In Yersinia enterocolitica serotype O:8 / biotype 1B (strain NCTC 13174 / 8081), this protein is Glyoxylate/hydroxypyruvate reductase B.